Reading from the N-terminus, the 422-residue chain is Beta-1,3-galactosyltransferase 2 (422 aa).

Over 1–20 (MLQWRRRHCCFAKMTWSPKR) the chain is Cytoplasmic. The helical; Signal-anchor for type II membrane protein transmembrane segment at 21-43 (SLLRTPLTGVLSLVFLFAMFLFF) threads the bilayer. Residues 44–422 (NHHDWLPGRP…AGRYRHRKLH (379 aa)) lie on the Lumenal side of the membrane. N-linked (GlcNAc...) asparagine glycans are attached at residues asparagine 75, asparagine 98, asparagine 119, asparagine 176, and asparagine 226. The tract at residues 91-110 (LRPHTASNSSNTELSPQGVT) is disordered. Positions 95 to 110 (TASNSSNTELSPQGVT) are enriched in polar residues.

The protein belongs to the glycosyltransferase 31 family. Mn(2+) serves as cofactor. As to expression, detected in brain and heart.

The protein resides in the golgi apparatus membrane. The catalysed reaction is an N-acetyl-beta-D-glucosaminyl derivative + UDP-alpha-D-galactose = a beta-D-galactosyl-(1-&gt;3)-N-acetyl-beta-D-glucosaminyl derivative + UDP + H(+). It carries out the reaction a beta-D-GlcNAc-(1-&gt;3)-beta-D-Gal-(1-&gt;4)-beta-D-Glc-(1&lt;-&gt;1)-Cer(d18:1(4E)) + UDP-alpha-D-galactose = a beta-D-Gal-(1-&gt;3)-beta-D-GlcNAc-(1-&gt;3)-beta-D-Gal-(1-&gt;4)-beta-D-Glc-(1&lt;-&gt;1')-Cer(d18:1(4E)) + UDP + H(+). The enzyme catalyses a neolactoside IV(3)-beta-GlcNAc-nLc4Cer(d18:1(4E)) + UDP-alpha-D-galactose = a neolactoside IV(3)-beta-[Gal-beta-(1-&gt;3)-GlcNAc]-nLc4Cer(d18:1(4E)) + UDP + H(+). Its pathway is protein modification; protein glycosylation. Beta-1,3-galactosyltransferase that transfers galactose from UDP-galactose to substrates with a terminal beta-N-acetylglucosamine (beta-GlcNAc) residue. Can also utilize substrates with a terminal galactose residue, albeit with lower efficiency. Involved in the biosynthesis of the carbohydrate moieties of glycolipids and glycoproteins. The chain is Beta-1,3-galactosyltransferase 2 from Mus musculus (Mouse).